A 269-amino-acid polypeptide reads, in one-letter code: Energy-coupling factor transporter transmembrane protein EcfT (269 aa).

Helical transmembrane passes span methionine 28–leucine 48, alanine 49–valine 69, isoleucine 73–leucine 93, alanine 109–threonine 129, and threonine 246–serine 266.

This sequence belongs to the energy-coupling factor EcfT family. In terms of assembly, forms a stable energy-coupling factor (ECF) transporter complex composed of 2 membrane-embedded substrate-binding proteins (S component), 2 ATP-binding proteins (A component) and 2 transmembrane proteins (T component). May be able to interact with more than 1 S component at a time.

The protein resides in the cell membrane. Functionally, transmembrane (T) component of an energy-coupling factor (ECF) ABC-transporter complex. Unlike classic ABC transporters this ECF transporter provides the energy necessary to transport a number of different substrates. In Streptococcus equi subsp. equi (strain 4047), this protein is Energy-coupling factor transporter transmembrane protein EcfT.